Consider the following 126-residue polypeptide: Aspartate 1-decarboxylase (126 aa).

The active-site Schiff-base intermediate with substrate; via pyruvic acid is Ser25. Ser25 bears the Pyruvic acid (Ser) mark. Thr57 is a substrate binding site. The active-site Proton donor is the Tyr58. 73–75 (GGA) provides a ligand contact to substrate.

It belongs to the PanD family. Heterooctamer of four alpha and four beta subunits. Requires pyruvate as cofactor. Is synthesized initially as an inactive proenzyme, which is activated by self-cleavage at a specific serine bond to produce a beta-subunit with a hydroxyl group at its C-terminus and an alpha-subunit with a pyruvoyl group at its N-terminus.

It localises to the cytoplasm. The catalysed reaction is L-aspartate + H(+) = beta-alanine + CO2. The protein operates within cofactor biosynthesis; (R)-pantothenate biosynthesis; beta-alanine from L-aspartate: step 1/1. Its function is as follows. Catalyzes the pyruvoyl-dependent decarboxylation of aspartate to produce beta-alanine. This is Aspartate 1-decarboxylase from Xanthomonas campestris pv. campestris (strain ATCC 33913 / DSM 3586 / NCPPB 528 / LMG 568 / P 25).